Reading from the N-terminus, the 163-residue chain is MAMMEYLTTRKDELIGWVRKFSIFPYPFVTACCGMEFMAVASTLYDTDRFGAALPRFTPRQSDLLMVVGTITHKEAPVIKRVYDQMCDPKWVMAFGACATSGGVYRNYTVLQGVDRIIPVDIYIPGCPPRPEMVIDAIMKLQDKIAGERHPIFPYEKQNPVPV.

4 residues coordinate [4Fe-4S] cluster: Cys-32, Cys-33, Cys-98, and Cys-127.

Belongs to the complex I 20 kDa subunit family. NDH-1 is composed of 14 different subunits. Subunits NuoB, C, D, E, F, and G constitute the peripheral sector of the complex. Requires [4Fe-4S] cluster as cofactor.

The protein localises to the cell inner membrane. The catalysed reaction is a quinone + NADH + 5 H(+)(in) = a quinol + NAD(+) + 4 H(+)(out). Functionally, NDH-1 shuttles electrons from NADH, via FMN and iron-sulfur (Fe-S) centers, to quinones in the respiratory chain. Couples the redox reaction to proton translocation (for every two electrons transferred, four hydrogen ions are translocated across the cytoplasmic membrane), and thus conserves the redox energy in a proton gradient. This Pelobacter propionicus (strain DSM 2379 / NBRC 103807 / OttBd1) protein is NADH-quinone oxidoreductase subunit B.